The following is a 246-amino-acid chain: Exosome complex component Rrp41 (246 aa).

This sequence belongs to the RNase PH family. Rrp41 subfamily. Component of the archaeal exosome complex. Forms a hexameric ring-like arrangement composed of 3 Rrp41-Rrp42 heterodimers. The hexameric ring associates with a trimer of Rrp4 and/or Csl4 subunits.

It localises to the cytoplasm. Functionally, catalytic component of the exosome, which is a complex involved in RNA degradation. Has 3'-&gt;5' exoribonuclease activity. Can also synthesize heteromeric RNA-tails. The sequence is that of Exosome complex component Rrp41 from Pyrobaculum arsenaticum (strain DSM 13514 / JCM 11321 / PZ6).